A 101-amino-acid polypeptide reads, in one-letter code: Urease subunit beta (101 aa).

It belongs to the urease beta subunit family. Heterotrimer of UreA (gamma), UreB (beta) and UreC (alpha) subunits. Three heterotrimers associate to form the active enzyme.

The protein localises to the cytoplasm. It carries out the reaction urea + 2 H2O + H(+) = hydrogencarbonate + 2 NH4(+). It participates in nitrogen metabolism; urea degradation; CO(2) and NH(3) from urea (urease route): step 1/1. This chain is Urease subunit beta, found in Sinorhizobium medicae (strain WSM419) (Ensifer medicae).